The primary structure comprises 240 residues: Ribosomal RNA large subunit methyltransferase E (240 aa).

Polar residues predominate over residues 1 to 13 (MAKKPGSQNTSGR). Residues 1–20 (MAKKPGSQNTSGRGQRDLKV) form a disordered region. The S-adenosyl-L-methionine site is built by Gly-85, Trp-87, Asp-113, Asp-129, and Asp-153. The active-site Proton acceptor is Lys-193.

It belongs to the class I-like SAM-binding methyltransferase superfamily. RNA methyltransferase RlmE family.

It localises to the cytoplasm. The catalysed reaction is uridine(2552) in 23S rRNA + S-adenosyl-L-methionine = 2'-O-methyluridine(2552) in 23S rRNA + S-adenosyl-L-homocysteine + H(+). Specifically methylates the uridine in position 2552 of 23S rRNA at the 2'-O position of the ribose in the fully assembled 50S ribosomal subunit. This chain is Ribosomal RNA large subunit methyltransferase E, found in Roseobacter denitrificans (strain ATCC 33942 / OCh 114) (Erythrobacter sp. (strain OCh 114)).